Reading from the N-terminus, the 1878-residue chain is DNA polymerase (1878 aa).

2 disordered regions span residues 691–727 (LFQA…KGPN) and 1839–1878 (TQDD…GTMF). Residues 694-709 (ADDDDDDDDEDEDDGL) are compositionally biased toward acidic residues. Residues 710–723 (LDERQQDSAEDMKK) are compositionally biased toward basic and acidic residues. Residues 1868 to 1878 (ITAGKTAGTMF) show a composition bias toward low complexity.

It belongs to the DNA polymerase type-B family.

It catalyses the reaction DNA(n) + a 2'-deoxyribonucleoside 5'-triphosphate = DNA(n+1) + diphosphate. This is DNA polymerase from Magallana gigas (Pacific oyster).